Here is a 106-residue protein sequence, read N- to C-terminus: Met repressor (106 aa).

It belongs to the MetJ family. In terms of assembly, homodimer.

The protein localises to the cytoplasm. This regulatory protein, when combined with SAM (S-adenosylmethionine) represses the expression of the methionine regulon and of enzymes involved in SAM synthesis. The sequence is that of Met repressor from Vibrio atlanticus (strain LGP32) (Vibrio splendidus (strain Mel32)).